Consider the following 475-residue polypeptide: Bifunctional protein HldE (475 aa).

Positions 1–321 (MADKIDISLY…RALHQITASH (321 aa)) are ribokinase. 197–200 (NLKE) lines the ATP pocket. D266 is a catalytic residue. Positions 346–475 (MTNGCFDILH…TSRLVEKMLN (130 aa)) are cytidylyltransferase.

It in the N-terminal section; belongs to the carbohydrate kinase PfkB family. In the C-terminal section; belongs to the cytidylyltransferase family. In terms of assembly, homodimer.

The enzyme catalyses D-glycero-beta-D-manno-heptose 7-phosphate + ATP = D-glycero-beta-D-manno-heptose 1,7-bisphosphate + ADP + H(+). It carries out the reaction D-glycero-beta-D-manno-heptose 1-phosphate + ATP + H(+) = ADP-D-glycero-beta-D-manno-heptose + diphosphate. The protein operates within nucleotide-sugar biosynthesis; ADP-L-glycero-beta-D-manno-heptose biosynthesis; ADP-L-glycero-beta-D-manno-heptose from D-glycero-beta-D-manno-heptose 7-phosphate: step 1/4. Its pathway is nucleotide-sugar biosynthesis; ADP-L-glycero-beta-D-manno-heptose biosynthesis; ADP-L-glycero-beta-D-manno-heptose from D-glycero-beta-D-manno-heptose 7-phosphate: step 3/4. In terms of biological role, catalyzes the phosphorylation of D-glycero-D-manno-heptose 7-phosphate at the C-1 position to selectively form D-glycero-beta-D-manno-heptose-1,7-bisphosphate. Catalyzes the ADP transfer from ATP to D-glycero-beta-D-manno-heptose 1-phosphate, yielding ADP-D-glycero-beta-D-manno-heptose. This is Bifunctional protein HldE from Coxiella burnetii (strain Dugway 5J108-111).